Reading from the N-terminus, the 85-residue chain is Contulakin-Lt1 (85 aa).

The N-terminal stretch at Met1–Gly22 is a signal peptide. A propeptide spanning residues Arg23–Leu60 is cleaved from the precursor. Cys65 and Cys70 are disulfide-bonded. The propeptide occupies Arg76 to Lys85.

The protein belongs to the conotoxin C superfamily. In terms of tissue distribution, expressed by the venom duct.

The protein localises to the secreted. Acts as an agonist of neurotensin receptors. It binds to human neurotensin type 1 receptor (NTSR1), rat neurotensin types 1 and 2 receptors (NTSR1/NTSR2) and mouse neurotensin type 3 receptor (SORT1). In Conus litteratus (Lettered cone), this protein is Contulakin-Lt1.